The sequence spans 157 residues: Ribosome maturation factor RimP (157 aa).

Belongs to the RimP family.

The protein resides in the cytoplasm. In terms of biological role, required for maturation of 30S ribosomal subunits. The polypeptide is Ribosome maturation factor RimP (Thermosynechococcus vestitus (strain NIES-2133 / IAM M-273 / BP-1)).